The following is a 232-amino-acid chain: uncharacterized protein (232 aa).

Transmembrane regions (helical) follow at residues 69–91 (LISAIITMVLFSLLTPLMFYILF), 104–126 (FLEPTIYFILFLFGLHACIFFAL), 139–161 (FSRFGAFLIPFTAILILALFFFL), 166–188 (ICFTILAVGLIGAFFAIPPAMLS), and 200–219 (FIYSTIVIYLIICVTFQLII).

It is found in the cell membrane. This is an uncharacterized protein from Bacillus subtilis (strain 168).